The following is a 560-amino-acid chain: MKVWMAILISILCWQSSAWAVCPAWSPARAQEEISRLQQQIKQWDDDYWKEGESEIEDGVYDQLSARLTQWQRCFGNEPRDAMMPPLAGTVMHPVAHTGVRKLADKNALRLWMREHNDLWVQPKVDGVAVTLVYRDGKLNKAISRGNGLKGEDWTQKVSLISAVPQTVSGPLANSTLQGEIFLKRKGHIQQQMGGINARAKVAGLMMRQGNSDTLNSLAVFVWAWPDGPHLMTDRLKDLATAGFTLTQTYTRAVKNADEVAHVRNEWWKAKLPFVTDGVVVRAAKEPESRHWLPGQAEWLVAWKYQPVAQVAEVKAIQFAVGKSGKISVVASLAPVMLDDKKVQRVNIGSVRRWQEWDIAPGDQILVSLAGQGIPRIDDVVWRGAERTKPTPPENRFNSLTCYFASDVCQEQFISRLVWLGSKQVLGLDGIGEAGWRALHQTHRFEHIFSWLLLTPEQLQNTPGIAKSKSAQLWHQFNLARQQPFTRWVMAMGIPLTRAALNASDERSWSQLLFSTEQFWQQLPGTGSGRARQVIEWKENAQIKKLGSWLAAQQITGFEP.

Lys-124 functions as the N6-AMP-lysine intermediate in the catalytic mechanism.

Belongs to the NAD-dependent DNA ligase family. LigB subfamily.

The enzyme catalyses NAD(+) + (deoxyribonucleotide)n-3'-hydroxyl + 5'-phospho-(deoxyribonucleotide)m = (deoxyribonucleotide)n+m + AMP + beta-nicotinamide D-nucleotide.. Catalyzes the formation of phosphodiester linkages between 5'-phosphoryl and 3'-hydroxyl groups in double-stranded DNA using NAD as a coenzyme and as the energy source for the reaction. The polypeptide is DNA ligase B (Escherichia coli O6:K15:H31 (strain 536 / UPEC)).